The sequence spans 878 residues: Leucine--tRNA ligase (878 aa).

Positions 43–53 match the 'HIGH' region motif; sequence PYPSGRIHMGH. Positions 630–634 match the 'KMSKS' region motif; the sequence is KMSKS. K633 serves as a coordination point for ATP.

The protein belongs to the class-I aminoacyl-tRNA synthetase family.

It localises to the cytoplasm. It catalyses the reaction tRNA(Leu) + L-leucine + ATP = L-leucyl-tRNA(Leu) + AMP + diphosphate. The polypeptide is Leucine--tRNA ligase (Rhodopseudomonas palustris (strain BisB5)).